Consider the following 185-residue polypeptide: Flavodoxin (185 aa).

One can recognise a Flavodoxin-like domain in the interval 4–159 (VLVIYDTRTG…ACRRLGRRLA (156 aa)).

This sequence belongs to the flavodoxin family. FMN is required as a cofactor.

Its function is as follows. Low-potential electron donor to a number of redox enzymes. In Aquifex aeolicus (strain VF5), this protein is Flavodoxin (fldA).